A 340-amino-acid chain; its full sequence is Methionine import ATP-binding protein MetN 2 (340 aa).

Positions 2 to 241 constitute an ABC transporter domain; the sequence is ITLQNVVKEY…PKEKVTQRFV (240 aa). ATP is bound at residue 38-45; it reads GYSGAGKS.

This sequence belongs to the ABC transporter superfamily. Methionine importer (TC 3.A.1.24) family. In terms of assembly, the complex is composed of two ATP-binding proteins (MetN), two transmembrane proteins (MetI) and a solute-binding protein (MetQ).

Its subcellular location is the cell membrane. It carries out the reaction L-methionine(out) + ATP + H2O = L-methionine(in) + ADP + phosphate + H(+). The catalysed reaction is D-methionine(out) + ATP + H2O = D-methionine(in) + ADP + phosphate + H(+). Functionally, part of the ABC transporter complex MetNIQ involved in methionine import. Responsible for energy coupling to the transport system. This chain is Methionine import ATP-binding protein MetN 2, found in Listeria innocua serovar 6a (strain ATCC BAA-680 / CLIP 11262).